The primary structure comprises 289 residues: Homoserine kinase (289 aa).

Residue 79-89 participates in ATP binding; it reads PLARGLGSSSS.

The protein belongs to the GHMP kinase family. Homoserine kinase subfamily.

The protein resides in the cytoplasm. It carries out the reaction L-homoserine + ATP = O-phospho-L-homoserine + ADP + H(+). It participates in amino-acid biosynthesis; L-threonine biosynthesis; L-threonine from L-aspartate: step 4/5. Catalyzes the ATP-dependent phosphorylation of L-homoserine to L-homoserine phosphate. The protein is Homoserine kinase of Streptococcus pneumoniae serotype 2 (strain D39 / NCTC 7466).